A 592-amino-acid chain; its full sequence is Bifunctional enzyme BirA/CoaX (592 aa).

The segment at 1 to 329 is biotin--protein ligase; the sequence is MTVLKPSHWR…ISLRPDNRSV (329 aa). Residues 83–259 enclose the BPL/LPL catalytic domain; sequence QTALKHECAS…ELGAVLEQYA (177 aa). The interval 336-592 is type III pantothenate kinase; that stretch reads DSERFLLLEG…AAEGGESEHA (257 aa). 344–351 is a binding site for ATP; the sequence is EGGNSRLK. Residues Y426 and 433 to 436 each bind substrate; that span reads GSDR. Residue D435 is the Proton acceptor of the active site. ATP is bound at residue T458. Residue T508 coordinates substrate.

This sequence in the N-terminal section; belongs to the biotin--protein ligase family. It in the C-terminal section; belongs to the type III pantothenate kinase family. Requires NH4(+) as cofactor. The cofactor is K(+).

It is found in the cytoplasm. The enzyme catalyses biotin + L-lysyl-[protein] + ATP = N(6)-biotinyl-L-lysyl-[protein] + AMP + diphosphate + H(+). It carries out the reaction (R)-pantothenate + ATP = (R)-4'-phosphopantothenate + ADP + H(+). The protein operates within cofactor biosynthesis; coenzyme A biosynthesis; CoA from (R)-pantothenate: step 1/5. Its function is as follows. Activates biotin to form biotinyl-5'-adenylate and transfers the biotin moiety to biotin-accepting proteins. In terms of biological role, catalyzes the phosphorylation of pantothenate (Pan), the first step in CoA biosynthesis. The polypeptide is Bifunctional enzyme BirA/CoaX (birA/coaX) (Neisseria gonorrhoeae (strain ATCC 700825 / FA 1090)).